A 1120-amino-acid chain; its full sequence is Phosphatidylinositide phosphatase SAC2 (1120 aa).

An SAC domain is found at Tyr-167–Gly-518. The hSac2 domain occupies Arg-593 to Met-760. Disordered stretches follow at residues Ser-837 to Asn-881 and Pro-979 to Pro-1008. Over residues Leu-851–Glu-860 the composition is skewed to basic and acidic residues. 2 stretches are compositionally biased toward polar residues: residues Asp-864–Arg-879 and Ser-998–Arg-1007.

It localises to the membrane. It is found in the clathrin-coated pit. Its subcellular location is the early endosome. The protein resides in the recycling endosome. It carries out the reaction a myo-inositol phosphate + H2O = myo-inositol + phosphate. Inositol 4-phosphatase which mainly acts on phosphatidylinositol 4-phosphate. May be functionally linked to OCRL, which converts phosphatidylinositol 4,5-bisphosphate to phosphatidylinositol, for a sequential dephosphorylation of phosphatidylinositol 4,5-bisphosphate at the 5 and 4 position of inositol, thus playing an important role in the endocytic recycling. The chain is Phosphatidylinositide phosphatase SAC2 from Danio rerio (Zebrafish).